A 464-amino-acid polypeptide reads, in one-letter code: MTKNISRDRHVAVLPFPFSSHAGRLLTLVRRLAAAAPNVTFSFYSTPKSIESLFSPAERVPGNVRPYAVPDGVPEGHVFSGEPVEHVNLYLTAVGEGESLRGVLKAAEAETGRRIGCVMSDAFMWFAGDLAEEMGVPWVPFMAGGANSITAHFYTDLIRETVGMHDIVGRENDIVKFIPGFSELRLGDLPTGVLFGNLESPFAIMLHKMGRALPKATAIAINSFEELDPDIIQDLKSKFKMILNVSPFSAISLPSSPPPPPTSYTDEYGCMPWLDNRKAASVAYIGFGTLATPPPVEIAALAEALEASGTPFLWSLKDNPKEFFPEGFIKRTSERQKIVPWAPQEQVLAHGSVGVFVTHCGWNSALESIAAGVPLIGRPFFGDHQLNAWLVENVWKIGVRVEGGVFTKSGTMSALELVLTHEKQKELRARVEMFKKLALKAVGPEQSSTRNLHTLLEIVAGYNL.

The an anthocyanidin site is built by Ser-19 and His-21. The active-site Proton acceptor is the His-21. An N-linked (GlcNAc...) asparagine glycan is attached at Asn-38. Asp-121 functions as the Charge relay in the catalytic mechanism. His-152 is a binding site for an anthocyanidin. 7 residues coordinate UDP-alpha-D-glucose: Ala-342, Gln-344, His-359, Trp-362, Asn-363, Ser-364, and Glu-367. Gly-382 lines the an anthocyanidin pocket. Asp-383 contributes to the UDP-alpha-D-glucose binding site.

Belongs to the UDP-glycosyltransferase family. Monomer. Mostly expressed in leaves and flowers and, to a lower extent, in roots. In flowers, mainly observed in petals, toruses and scapes, and at lower levels in pistils and stamens.

The catalysed reaction is cyanidin + UDP-alpha-D-galactose = cyanidin 3-O-beta-D-galactoside + UDP + H(+). It carries out the reaction cyanidin + UDP-alpha-D-glucose = cyanidin 3-O-beta-D-glucoside + UDP + H(+). It catalyses the reaction delphinidin + UDP-alpha-D-glucose = delphinidin 3-O-beta-D-glucoside + UDP. The enzyme catalyses malvidin + UDP-alpha-D-glucose = malvidin 3-O-beta-D-glucoside + UDP. The catalysed reaction is delphinidin + UDP-alpha-D-galactose = delphinidin 3-O-beta-D-galactoside + UDP + H(+). It carries out the reaction pelargonidin + UDP-alpha-D-galactose = pelargonidin 3-O-beta-D-galactoside betaine + UDP. It catalyses the reaction peonidin + UDP-alpha-D-galactose = peonidin 3-O-beta-D-galactoside + UDP. The enzyme catalyses malvidin + UDP-alpha-D-galactose = malvidin 3-O-beta-D-galactoside + UDP + H(+). The catalysed reaction is petunidin + UDP-alpha-D-galactose = petunidin 3-O-beta-D-galactoside + UDP. It carries out the reaction an anthocyanidin + UDP-alpha-D-glucose + H(+) = an anthocyanidin 3-O-beta-D-glucoside + UDP. It catalyses the reaction an anthocyanidin + UDP-alpha-D-galactose = an anthocyanidin 3-O-beta-D-galactoside + UDP. The protein operates within pigment biosynthesis; anthocyanin biosynthesis. Its function is as follows. Flavonoid 3-O-glycosyltransferase involved in the biosynthesis of anthocyanins conferring flower red/pink colors, mainly anthocyanidin 3-O-glycosides. Catalyzes the addition of UDP-sugar to the 3-OH of anthocyanidin, with a preference for UDP-galactose (UDP-Gal) as sugar donor and cyanidin as substrate; able to use delphinidin, pelargonidin, peonidin, malvidin and petunidin as substrates in the presence of UDP-Gal. Can also use UDP-glucose (UDP-Glu) as sugar donor with delphinidin, cyanidin and malvidin as substrates, but not active on pelargonidin, peonidin and petunidin. The polypeptide is Anthocyanidin 3-O-galactosyltransferase 3GT1 (Rhododendron delavayi (Rhododendron)).